Here is a 152-residue protein sequence, read N- to C-terminus: Kininogen-1c (152 aa).

The signal sequence occupies residues 1–23 (MRLWFCLSLFIVLCLEHFPGTLA). Basic and acidic residues predominate over residues 28–44 (VPESEEKTEQFLRDLPK). Residues 28 to 152 (VPESEEKTEQ…RGKFHSQSHV (125 aa)) form a disordered region.

The protein belongs to the bradykinin-related peptide family. In terms of tissue distribution, expressed by the skin glands.

It localises to the secreted. In terms of biological role, potent vasodilator. Binds B1 (BDKRB1) and B2 (BDKRB2) bradykinin receptors. The polypeptide is Kininogen-1c (Bombina maxima (Giant fire-bellied toad)).